Reading from the N-terminus, the 379-residue chain is Homoserine O-succinyltransferase (379 aa).

The AB hydrolase-1 domain occupies 51 to 360; it reads NAVLICHALS…DSPYGHDAFL (310 aa). The active-site Nucleophile is the serine 157. Substrate is bound at residue arginine 227. Residues aspartate 323 and histidine 356 contribute to the active site. Aspartate 357 contributes to the substrate binding site.

The protein belongs to the AB hydrolase superfamily. MetX family. Homodimer.

Its subcellular location is the cytoplasm. The enzyme catalyses L-homoserine + succinyl-CoA = O-succinyl-L-homoserine + CoA. Its pathway is amino-acid biosynthesis; L-methionine biosynthesis via de novo pathway; O-succinyl-L-homoserine from L-homoserine: step 1/1. Its function is as follows. Transfers a succinyl group from succinyl-CoA to L-homoserine, forming succinyl-L-homoserine. The chain is Homoserine O-succinyltransferase from Pseudomonas putida (strain ATCC 700007 / DSM 6899 / JCM 31910 / BCRC 17059 / LMG 24140 / F1).